A 302-amino-acid polypeptide reads, in one-letter code: Serine/threonine-protein phosphatase alpha-3 isoform (302 aa).

4 residues coordinate Mn(2+): D62, H64, D90, and N122. H123 functions as the Proton donor in the catalytic mechanism. Residues H171 and H246 each contribute to the Mn(2+) site.

It belongs to the PPP phosphatase family. PP-1 subfamily. Interacts with Nop17l. Mn(2+) is required as a cofactor.

The catalysed reaction is O-phospho-L-seryl-[protein] + H2O = L-seryl-[protein] + phosphate. The enzyme catalyses O-phospho-L-threonyl-[protein] + H2O = L-threonyl-[protein] + phosphate. The sequence is that of Serine/threonine-protein phosphatase alpha-3 isoform (Pp1-13C) from Drosophila melanogaster (Fruit fly).